The primary structure comprises 462 residues: Argininosuccinate lyase (462 aa).

The protein belongs to the lyase 1 family. Argininosuccinate lyase subfamily.

It is found in the cytoplasm. The catalysed reaction is 2-(N(omega)-L-arginino)succinate = fumarate + L-arginine. It functions in the pathway amino-acid biosynthesis; L-arginine biosynthesis; L-arginine from L-ornithine and carbamoyl phosphate: step 3/3. The protein is Argininosuccinate lyase of Xanthobacter autotrophicus (strain ATCC BAA-1158 / Py2).